The primary structure comprises 88 residues: MLDTKFDELMEFPASFPFKVVGDASDTLQDRVVAVVQGLAPGDYAPSTKASSKGTYYSVTIRVTVTSKEQIEKLYTQLAELEGVKRVL.

The protein belongs to the UPF0250 family.

This is UPF0250 protein swp_3927 from Shewanella piezotolerans (strain WP3 / JCM 13877).